We begin with the raw amino-acid sequence, 177 residues long: Large ribosomal subunit protein uL10 (177 aa).

Belongs to the universal ribosomal protein uL10 family. Part of the ribosomal stalk of the 50S ribosomal subunit. The N-terminus interacts with L11 and the large rRNA to form the base of the stalk. The C-terminus forms an elongated spine to which L12 dimers bind in a sequential fashion forming a multimeric L10(L12)X complex.

In terms of biological role, forms part of the ribosomal stalk, playing a central role in the interaction of the ribosome with GTP-bound translation factors. The chain is Large ribosomal subunit protein uL10 from Kocuria rhizophila (strain ATCC 9341 / DSM 348 / NBRC 103217 / DC2201).